A 185-amino-acid polypeptide reads, in one-letter code: Ribosome-recycling factor (185 aa).

The tract at residues 138–185 (ALKKQEKDGEITEDEERRLEKEVQKVTDESTKKIDQMADNKRKEIIQG) is disordered.

Belongs to the RRF family.

It localises to the cytoplasm. Its function is as follows. Responsible for the release of ribosomes from messenger RNA at the termination of protein biosynthesis. May increase the efficiency of translation by recycling ribosomes from one round of translation to another. In Lactobacillus delbrueckii subsp. bulgaricus (strain ATCC BAA-365 / Lb-18), this protein is Ribosome-recycling factor.